We begin with the raw amino-acid sequence, 84 residues long: MIFFFIIKKLKTIKASFIKSFFIKDIDESLETEQINFYLKRIINLEGYYYGNYDLTTIKEKYYTLIINNAFIENEIVPDLIEKH.

This is an uncharacterized protein from Rickettsia prowazekii (strain Madrid E).